A 73-amino-acid polypeptide reads, in one-letter code: SVIKVPLKKLKSIRQAMKEKGLLEEFLKTHKYDPAQRYRIGDISVALEPMAYLEAAYFGEISIGTPPQNFLVL.

Residues 1–43 (SVIKVPLKKLKSIRQAMKEKGLLEEFLKTHKYDPAQRYRIGDI) constitute a propeptide, activation peptide. Residues 57-73 (YFGEISIGTPPQNFLVL) enclose the Peptidase A1 domain.

It belongs to the peptidase A1 family.

It localises to the secreted. The catalysed reaction is More restricted specificity than pepsin A, but shows preferential cleavage at Tyr-|-Xaa bonds. High activity on hemoglobin.. Its function is as follows. Hydrolyzes a variety of proteins. The polypeptide is Gastricsin (PGC) (Sus scrofa (Pig)).